The primary structure comprises 92 residues: Small ribosomal subunit protein uS19 (92 aa).

It belongs to the universal ribosomal protein uS19 family.

Its function is as follows. Protein S19 forms a complex with S13 that binds strongly to the 16S ribosomal RNA. The polypeptide is Small ribosomal subunit protein uS19 (Geobacillus kaustophilus (strain HTA426)).